We begin with the raw amino-acid sequence, 446 residues long: Coiled-coil domain-containing protein 112 (446 aa).

2 coiled-coil regions span residues 35–116 and 219–400; these read KTER…RKID and ERKK…NVSR. 2 disordered regions span residues 253–272 and 390–430; these read FHNK…KKQK and LKEK…LLHI. Residues 255–268 show a composition bias toward basic and acidic residues; it reads NKQEDNQKQKEEQR.

It localises to the cytoplasm. Its subcellular location is the cytoskeleton. It is found in the microtubule organizing center. The protein localises to the centrosome. The protein resides in the centriolar satellite. This Homo sapiens (Human) protein is Coiled-coil domain-containing protein 112 (CCDC112).